Here is a 303-residue protein sequence, read N- to C-terminus: uncharacterized protein (303 aa).

4 helical membrane passes run 102 to 122, 132 to 152, 184 to 204, and 221 to 241; these read TYLL…VMAI, FVLF…FLFF, LLYF…SLIY, and FILL…FLLF.

The protein localises to the membrane. This is an uncharacterized protein from Dictyostelium discoideum (Social amoeba).